We begin with the raw amino-acid sequence, 484 residues long: Transcription factor TGAL4 (484 aa).

Positions 1–11 (MGEASSSSGHP) are enriched in polar residues. 3 disordered regions span residues 1–22 (MGEA…GYGF), 84–137 (ATAA…NASS), and 155–181 (QQEQ…DPKT). Positions 123-137 (SESSSKNNSNQNASS) are enriched in low complexity. Positions 163 to 173 (ATNSPTHSSKT) are enriched in polar residues. The region spanning 178–222 (DPKTMRRLAQNREAARKSRLRKKAYIQQLESSKLKLAQMEQDIHR) is the bZIP domain. The segment at 180–200 (KTMRRLAQNREAARKSRLRKK) is basic motif. Residues 206-220 (LESSKLKLAQMEQDI) are leucine-zipper. In terms of domain architecture, DOG1 spans 241–455 (AAMFDVDYAR…RALSSLWASR (215 aa)).

It belongs to the bZIP family. As to quaternary structure, interacts with NPR1/NH1 and NPR3/NH3.

It localises to the nucleus. Functionally, transcriptional regulator involved in defense response. The chain is Transcription factor TGAL4 from Oryza sativa subsp. japonica (Rice).